The sequence spans 241 residues: Histone H1-II (241 aa).

A compositionally biased stretch (basic and acidic residues) spans 1–10 (MASDAPEVKA). Disordered regions lie at residues 1 to 27 (MASD…THPP) and 89 to 241 (NSYK…AKKA). The span at 11 to 20 (PKAKTQKKPK) shows a compositional bias: basic residues. The H15 domain maps to 24-95 (THPPYIQMVT…KVKNSYKLSD (72 aa)). Over residues 99-111 (SKAKAAAKPKAAP) the composition is skewed to basic residues. A run of 3 repeats spans residues 111-116 (PKKAAA), 117-122 (PKKAAA), and 123-128 (PKKAKA). Positions 111 to 217 (PKKAAAPKKA…KAATPKKAKA (107 aa)) are 8 X 6 AA repeats of P-K-K-A-[AK]-A. A compositionally biased stretch (basic and acidic residues) spans 129 to 155 (PKKEGEKKAVKPKSEKKAAKPKTEKKP). Basic residues-rich tracts occupy residues 156-184 (KAAK…KATP) and 194-241 (AAPK…AKKA). Residues 183–186 (TPKK) mediate DNA binding. Repeat copies occupy residues 184–189 (PKKAAA), 190–195 (PKKAAA), 196–201 (PKKAKA), 204–209 (PKKAKA), and 212–217 (PKKAKA). 2 DNA-binding regions span residues 203–206 (TPKK) and 211–214 (TPKK).

Belongs to the histone H1/H5 family.

The protein resides in the nucleus. Its subcellular location is the chromosome. Histones H1 are necessary for the condensation of nucleosome chains into higher-order structures. In Volvox carteri (Green alga), this protein is Histone H1-II (H1-II).